A 37-amino-acid chain; its full sequence is Cytochrome b6-f complex subunit 5 (37 aa).

A helical membrane pass occupies residues 5-25; that stretch reads LLSGIVLGLIPITLAGLFVTA.

This sequence belongs to the PetG family. In terms of assembly, the 4 large subunits of the cytochrome b6-f complex are cytochrome b6, subunit IV (17 kDa polypeptide, PetD), cytochrome f and the Rieske protein, while the 4 small subunits are PetG, PetL, PetM and PetN. The complex functions as a dimer.

Its subcellular location is the plastid. It localises to the chloroplast thylakoid membrane. Its function is as follows. Component of the cytochrome b6-f complex, which mediates electron transfer between photosystem II (PSII) and photosystem I (PSI), cyclic electron flow around PSI, and state transitions. PetG is required for either the stability or assembly of the cytochrome b6-f complex. This Chara vulgaris (Common stonewort) protein is Cytochrome b6-f complex subunit 5.